The sequence spans 1049 residues: Self-sufficient cytochrome P450 monooxygenase CYP505E4 (1049 aa).

C405 serves as a coordination point for heme. Polar residues predominate over residues 461-470; it reads SATALSQHNM. Residues 461 to 491 form a disordered region; sequence SATALSQHNMSAGATASPGSSTHLAGDENGQ. Over residues 471–482 the composition is skewed to low complexity; sequence SAGATASPGSST. The region spanning 499–640 is the Flavodoxin-like domain; it reads ISFFYGSNSG…DLEVWEETNL (142 aa). FMN-binding positions include 505 to 509 and 584 to 616; these read SNSGT and VFGC…TRLT. The region spanning 678–906 is the FAD-binding FR-type domain; that stretch reads RDLVEGKVTA…RPAKDAFHLP (229 aa).

It in the N-terminal section; belongs to the cytochrome P450 family. The cofactor is FAD. It depends on FMN as a cofactor. Requires heme as cofactor.

It catalyses the reaction 2 oxidized [cytochrome P450] + NADPH = 2 reduced [cytochrome P450] + NADP(+) + H(+). It carries out the reaction an organic molecule + reduced [NADPH--hemoprotein reductase] + O2 = an alcohol + oxidized [NADPH--hemoprotein reductase] + H2O + H(+). The catalysed reaction is dodecanoate + reduced [NADPH--hemoprotein reductase] + O2 = 5-hydroxydodecanoate + oxidized [NADPH--hemoprotein reductase] + H2O + H(+). The enzyme catalyses dodecan-1-ol + reduced [NADPH--hemoprotein reductase] + O2 = 1,5-dodecanediol + oxidized [NADPH--hemoprotein reductase] + H2O + H(+). It catalyses the reaction dodecanoate + reduced [NADPH--hemoprotein reductase] + O2 = 9-hydroxydodecanoate + oxidized [NADPH--hemoprotein reductase] + H2O + H(+). It carries out the reaction dodecan-1-ol + reduced [NADPH--hemoprotein reductase] + O2 = 1,4-dodecanediol + oxidized [NADPH--hemoprotein reductase] + H2O + H(+). The catalysed reaction is dodecan-1-ol + reduced [NADPH--hemoprotein reductase] + O2 = 1,6-dodecanediol + oxidized [NADPH--hemoprotein reductase] + H2O + H(+). Functionally, self-sufficient cytochrome P450 monooxygenase that catalyzes the regioselective in-chain hydroxylation of alkanes, fatty alcohols, and fatty acids at the omega-7 position. Performs hydroxylation of C10-C16 n-alkanes and C12 and C14 fatty alcohols; and thereby enables the one step biocatalytic synthesis of rare alcohols such as 5-dodecanol and 7-tetradecanol. Converts 1-dodecanol into 1,5-dodecanediol as major product with very little sub-terminally hydroxylated products with the 1,4-dodecanediol and 1,6-dodecanediol more abundant. Converts dodecanoic acid to 5-hydroxydodecanoic acid which can be further converted into delta-dodecalactone by lactonization of the 5-hydroxy acid at low pH. Also gives sub-terminal hydroxylation of dodecanoic acid with 9-hydroxydodecanoic acid being the second most abundant product. Does not show any significant activity toward tetradecanoic acid. The chain is Self-sufficient cytochrome P450 monooxygenase CYP505E4 from Penicillium camemberti (strain FM 013).